Consider the following 358-residue polypeptide: Peptide chain release factor 1 (358 aa).

Q233 carries the post-translational modification N5-methylglutamine.

The protein belongs to the prokaryotic/mitochondrial release factor family. Methylated by PrmC. Methylation increases the termination efficiency of RF1.

The protein localises to the cytoplasm. Peptide chain release factor 1 directs the termination of translation in response to the peptide chain termination codons UAG and UAA. The sequence is that of Peptide chain release factor 1 from Blochmanniella floridana.